Here is a 297-residue protein sequence, read N- to C-terminus: MALLCPSLPSPNSRLFRCRSSNISSKYHGASKELMIARSGVSTRSISSEKGLSRRDLVLIGLSSPLSMFLPLSSPVTHAEEDVKMSGEELKMGTMVDDINAYSYAYPLDYPSEKLVFKWVESRKPERYSSAAPLSPDARLRIVSERVDLTDNLVISISIGPPNSRLTSKEKKTWSAKEVADSVLSDKSALRVTSSQRLEESSVLDAHASDIDGEPYWYYEYLVRKSPTKIAEASKLYRHYISSTAERDGYLYTINASTLGKQWDKMGPVLERAVGSFRLLPPTDSYVPPYKDPWRFW.

This sequence belongs to the PsbP family.

The protein localises to the plastid. The protein resides in the chloroplast thylakoid lumen. Its function is as follows. Involved in strigolactone biosynthesis. The sequence is that of PsbP domain-containing protein 5, chloroplastic (PPD5) from Arabidopsis thaliana (Mouse-ear cress).